The chain runs to 719 residues: Polyribonucleotide nucleotidyltransferase (719 aa).

The Mg(2+) site is built by D491 and D497. The region spanning 558-617 (PRMLTIKINPEKIRDVIGKGGATIRALTEETGTQIDISDDGTIVIASVDEAQAKEAQRRI) is the KH domain. Positions 627 to 695 (GQVYDGSVLR…DKGRLRLSVK (69 aa)) constitute an S1 motif domain.

This sequence belongs to the polyribonucleotide nucleotidyltransferase family. Mg(2+) serves as cofactor.

Its subcellular location is the cytoplasm. It catalyses the reaction RNA(n+1) + phosphate = RNA(n) + a ribonucleoside 5'-diphosphate. Involved in mRNA degradation. Catalyzes the phosphorolysis of single-stranded polyribonucleotides processively in the 3'- to 5'-direction. The protein is Polyribonucleotide nucleotidyltransferase of Bordetella petrii (strain ATCC BAA-461 / DSM 12804 / CCUG 43448).